A 481-amino-acid polypeptide reads, in one-letter code: Abl interactor 1 (481 aa).

A2 is modified (N-acetylalanine). The required for binding to WASF1 stretch occupies residues 18-79; sequence ALIESYQNLT…NNVLQLLDIQ (62 aa). In terms of domain architecture, t-SNARE coiled-coil homology spans 45 to 107; that stretch reads KALEETKAYT…DIHKEKVARR (63 aa). Position 53 is a phosphotyrosine (Y53). A disordered region spans residues 158–285; that stretch reads AKHGNNQPAR…PGAAPGSQYG (128 aa). A compositionally biased stretch (polar residues) spans 161–175; that stretch reads GNNQPARTGTLSRTN. A phosphothreonine mark is found at T174 and T178. S183 and S187 each carry phosphoserine. Residue Y213 is modified to Phosphotyrosine. Phosphothreonine is present on T215. 3 positions are modified to phosphoserine: S216, S222, and S225. Residues 222 to 235 show a composition bias toward polar residues; the sequence is SQHSPGRTASLNQR. 2 stretches are compositionally biased toward low complexity: residues 248–258 and 272–282; these read SRENSGSSSIG and GPAAPGAAPGS. Residues S292 and S296 each carry the phosphoserine modification. Disordered stretches follow at residues 318–348 and 361–392; these read AQPH…LTPQ and NIAD…PPPV. Composition is skewed to pro residues over residues 366–376 and 383–392; these read PTPPPPPPPDD and SPPPPPPPPV. The SH3 domain maps to 419 to 478; the sequence is NYIEKVVAIYDYTKDKDDELSFKEGAIIYVIKKNDDGWFEGVCNRVTGLFPGNYVESIMH. The residue at position 428 (Y428) is a Phosphotyrosine. At S439 the chain carries Phosphoserine. T480 is subject to Phosphothreonine.

The protein belongs to the ABI family. As to quaternary structure, interacts with ENAH, Abelson murine leukemia virus V-ABL, ABL1, STX1A, SNAP25, VAMP2, and through its N-terminus with WASF1. Part of a complex consisting of ABI1, STX1A and SNAP25. Part of a complex consisting of ABI1, EPS8 and SOS1. Interacts with EPS8, SOS1, SOS2, GRB2, SPTA1, and the first SH3 domain of NCK1. Component of the WAVE2 complex composed of ABI1, CYFIP1/SRA1, NCKAP1/NAP1 (NCKAP1l/HEM1 in hematopoietic cells) and WASF2/WAVE2. Interacts (via SH3 domain) with SHANK2 and SHANK3, but not SHANK1; the interaction is direct. Interacts with the heterodimer MYC:MAX; the interaction may enhance MYC:MAX transcriptional activity. Interacts with FNBP1L (via the SH3 domain), WASF2, and CDC42, but only in the presence of FNBP1L. Phosphorylated on tyrosine residues after serum stimulation or induction by v-Abl. Seems to be phosphorylated at Tyr-53 by ABL1, required for nuclear but not for synaptic localization. Widely expressed with highest levels in bone marrow, spleen, brain, testes, and embryonic brain. In adult brain prominently expressed in the neocortex, hippocampus and dentate gyrus.

The protein localises to the cytoplasm. It localises to the nucleus. It is found in the cell projection. The protein resides in the lamellipodium. Its subcellular location is the filopodium. The protein localises to the growth cone. It localises to the postsynaptic density. It is found in the cytoskeleton. May act in negative regulation of cell growth and transformation by interacting with nonreceptor tyrosine kinases ABL1 and/or ABL2. In vitro, at least isoform 2 and isoform 4 suppress the transforming activity of Abelson murine leukemia virus (v-Abl) after overexpression in fibroblasts. May play a role in regulation EGF-induced Erk pathway activation. Involved in cytoskeletal reorganization and EGFR signaling. Together with EPS8 participates in transduction of signals from Ras to Rac. In vitro, a trimeric complex of ABI1, EPS8 and SOS1 exhibits Rac specific guanine nucleotide exchange factor (GEF) activity and ABI1 seems to act as an adapter in the complex. Regulates ABL1/c-Abl-mediated phosphorylation of ENAH. Recruits WASF1 to lamellipodia and there seems to regulate WASF1 protein level. In brain, seems to regulate the dendritic outgrowth and branching as well as to determine the shape and number of synaptic contacts of developing neurons. The polypeptide is Abl interactor 1 (Mus musculus (Mouse)).